The primary structure comprises 997 residues: Translation initiation factor IF-2 (997 aa).

A disordered region spans residues 101 to 409 (ELAAEQAAAR…QHQDRRHEQV (309 aa)). Low complexity-rich tracts occupy residues 116 to 185 (AEAV…QAEP), 195 to 208 (AAPA…VEPA), and 244 to 280 (PSAP…PAAP). Residues 281–292 (DRAREEARRAAE) show a composition bias toward basic and acidic residues. A compositionally biased stretch (gly residues) spans 385 to 394 (RAGGKGGRGG). A compositionally biased stretch (basic and acidic residues) spans 400 to 409 (QHQDRRHEQV). One can recognise a tr-type G domain in the interval 498–665 (PRAPVVTVMG…NVLLQAEILE (168 aa)). A G1 region spans residues 507–514 (GHVDHGKT). Residue 507 to 514 (GHVDHGKT) participates in GTP binding. The G2 stretch occupies residues 532–536 (GITQH). Positions 553–556 (DTPG) are G3. GTP contacts are provided by residues 553 to 557 (DTPGH) and 607 to 610 (NKID). The G4 stretch occupies residues 607–610 (NKID). The tract at residues 643–645 (SAK) is G5.

Belongs to the TRAFAC class translation factor GTPase superfamily. Classic translation factor GTPase family. IF-2 subfamily.

It localises to the cytoplasm. One of the essential components for the initiation of protein synthesis. Protects formylmethionyl-tRNA from spontaneous hydrolysis and promotes its binding to the 30S ribosomal subunits. Also involved in the hydrolysis of GTP during the formation of the 70S ribosomal complex. The polypeptide is Translation initiation factor IF-2 (Bordetella bronchiseptica (strain ATCC BAA-588 / NCTC 13252 / RB50) (Alcaligenes bronchisepticus)).